The chain runs to 427 residues: POU domain protein CF1A (427 aa).

Disordered regions lie at residues Tyr39–Ser77, His196–Ser217, Thr288–Thr309, and His390–His427. Over residues Ala49–Gly66 the composition is skewed to low complexity. Residues Gln67–Ser77 show a composition bias toward gly residues. A POU-specific domain is found at Glu212–Asp286. Positions Lys304–Thr363 form a DNA-binding region, homeobox.

Belongs to the POU transcription factor family. Class-3 subfamily. In terms of tissue distribution, coexpressed with acj6 in overlapping subsets of neurons in the embryonic epidermis and central nervous system. First detected in the precursor of the tracheal pits and the stomodeal invagination and later in the peripheral nervous system.

It localises to the nucleus. Its function is as follows. Binds to a DNA sequence element required for the expression of the dopa decarboxylase gene (Ddc) in specific dopaminergic neurons. Could also play an early role in specific ectodermal cells, and a subsequent role in the embryonic nervous system. This chain is POU domain protein CF1A (vvl), found in Drosophila melanogaster (Fruit fly).